A 320-amino-acid chain; its full sequence is Lipoyl synthase (320 aa).

Residues 1-26 (MVTVVDRVTSRRLRHPEKMHRPDTSI) are disordered. [4Fe-4S] cluster contacts are provided by C59, C64, C70, C85, C89, C92, and S298. Residues 71–287 (WSQRHASFMI…AKIGKVKGFL (217 aa)) form the Radical SAM core domain.

The protein belongs to the radical SAM superfamily. Lipoyl synthase family. The cofactor is [4Fe-4S] cluster.

Its subcellular location is the cytoplasm. It carries out the reaction [[Fe-S] cluster scaffold protein carrying a second [4Fe-4S](2+) cluster] + N(6)-octanoyl-L-lysyl-[protein] + 2 oxidized [2Fe-2S]-[ferredoxin] + 2 S-adenosyl-L-methionine + 4 H(+) = [[Fe-S] cluster scaffold protein] + N(6)-[(R)-dihydrolipoyl]-L-lysyl-[protein] + 4 Fe(3+) + 2 hydrogen sulfide + 2 5'-deoxyadenosine + 2 L-methionine + 2 reduced [2Fe-2S]-[ferredoxin]. It participates in protein modification; protein lipoylation via endogenous pathway; protein N(6)-(lipoyl)lysine from octanoyl-[acyl-carrier-protein]: step 2/2. Functionally, catalyzes the radical-mediated insertion of two sulfur atoms into the C-6 and C-8 positions of the octanoyl moiety bound to the lipoyl domains of lipoate-dependent enzymes, thereby converting the octanoylated domains into lipoylated derivatives. The sequence is that of Lipoyl synthase from Bartonella quintana (strain Toulouse) (Rochalimaea quintana).